Consider the following 1013-residue polypeptide: Chitin synthase A (1013 aa).

A glycan (N-linked (GlcNAc...) asparagine) is linked at Asn-10. 2 disordered regions span residues 26–83 and 95–218; these read RYSY…AADW and ERAD…RRGV. Low complexity predominate over residues 64 to 81; that stretch reads TASRPASPARPWSPTRAA. Polar residues predominate over residues 154–173; the sequence is TISSRHGPQGSVQSFTSEST. Residues Asn-194 and Asn-316 are each glycosylated (N-linked (GlcNAc...) asparagine). Helical transmembrane passes span 646-666, 686-706, 721-741, 759-779, and 792-811; these read LLQLIFTYFGLANFYLAFFFI, IFIVLRYACVLVMCLQFIFSM, MIVYSIVMAYTAFCTLYLIVL, LFVNIVVSLLSTVGLYFFTSF, and AQYFALLPSYICTLQCYAFC. Asn-837 carries N-linked (GlcNAc...) asparagine glycosylation. A run of 2 helical transmembrane segments spans residues 892-912 and 919-939; these read VSVWMVANVVLAMAVSEVYGV and VYLAIILWSVAVLAIIRAIGS. N-linked (GlcNAc...) asparagine glycosylation is found at Asn-967, Asn-980, Asn-989, and Asn-995.

It belongs to the chitin synthase family. Class II subfamily. Mainly expressed in the metulae, phialides, and conidia.

It localises to the cell membrane. It is found in the cell septum. It catalyses the reaction [(1-&gt;4)-N-acetyl-beta-D-glucosaminyl](n) + UDP-N-acetyl-alpha-D-glucosamine = [(1-&gt;4)-N-acetyl-beta-D-glucosaminyl](n+1) + UDP + H(+). Functionally, polymerizes chitin, a structural polymer of the cell wall and septum, by transferring the sugar moiety of UDP-GlcNAc to the non-reducing end of the growing chitin polymer. Seems not to be involved in hyphal growth, but, with chsC, chsA shares critical functions in hyphal wall integrity and differentiation. ChsA and chsC share also overlapping roles in septum formation. Invoved in the production of the asexual spores (conidia) that are formed by differentiated aerial hyphae called conidiophores. This Emericella nidulans (strain FGSC A4 / ATCC 38163 / CBS 112.46 / NRRL 194 / M139) (Aspergillus nidulans) protein is Chitin synthase A.